A 242-amino-acid polypeptide reads, in one-letter code: Ras-like protein family member 11A (242 aa).

Residues 17–241 form a small GTPase-like region; sequence ESSSDYLLPK…SPKVKAPSAL (225 aa). GTP contacts are provided by residues 34–41, 81–85, and 147–150; these read GAGRVGKS, DTPGG, and NKGD.

This sequence belongs to the small GTPase superfamily. Ras family. Interacts with UBF/UBTF. In terms of tissue distribution, widely expressed. Down-regulated in prostate tumors compared to normal prostate tissue. High levels found in colon tumor and normal colon tissue followed by small intestine, liver, jejunum, ileum, bladder and aorta. Lowest levels observed in endothelial cells.

The protein resides in the nucleus. It localises to the nucleolus. It carries out the reaction GTP + H2O = GDP + phosphate + H(+). In terms of biological role, regulator of rDNA transcription. Acts in cooperation UBF/UBTF and positively regulates RNA polymerase I transcription. This Homo sapiens (Human) protein is Ras-like protein family member 11A.